The chain runs to 397 residues: MFFVHFWVLSKPPFYSPNPEYPLHNYDTYLIYIKTALFYPLHKFSCFLCVLGSEVIRDQQTVLLFGILIFSIFVALIAINRKNLELDRFAKWYGLLAFGVLTSLELVVTRSGDIANYFGPPEKIFFLPSYRHYPVVFLPLICVYSLSILYSTLSEENKGMIKTSANAFLKTMLFTLLICSFILNFFPGIKTGEHNFVSMSERSAILKTYDVQPDENLKKLHLNPEIVKKRAKKLEELRLSVFAENNILLYKPDEVKLLPKQSQLQGVLRIYNDVKFVLFQHPISNENRSIIVFNEIYIPQNAKLRFSIALHPDVWDPEKGDGVTFEVYIRDEGFEELVFSKYIDPKHNPEERKWNDFEVDLSRYAGRNVTIIFSTLPGPNNDSRWDWAWWGEPRIEW.

The next 4 helical transmembrane spans lie at 62–79 (VLLFGILIFSIFVALIAI), 92–109 (WYGLLAFGVLTSLELVVT), 135–154 (VVFLPLICVYSLSILYSTLS), and 167–189 (AFLKTMLFTLLICSFILNFFPGI).

It is found in the cell membrane. This is an uncharacterized protein from Archaeoglobus fulgidus (strain ATCC 49558 / DSM 4304 / JCM 9628 / NBRC 100126 / VC-16).